Here is a 295-residue protein sequence, read N- to C-terminus: Glycine--tRNA ligase alpha subunit (295 aa).

It belongs to the class-II aminoacyl-tRNA synthetase family. In terms of assembly, tetramer of two alpha and two beta subunits.

The protein localises to the cytoplasm. The catalysed reaction is tRNA(Gly) + glycine + ATP = glycyl-tRNA(Gly) + AMP + diphosphate. The chain is Glycine--tRNA ligase alpha subunit from Rhodospirillum rubrum (strain ATCC 11170 / ATH 1.1.1 / DSM 467 / LMG 4362 / NCIMB 8255 / S1).